Consider the following 39-residue polypeptide: Ribonuclease UK114 (39 aa).

The protein belongs to the RutC family. In terms of assembly, monomer. Post-translationally, the N-terminus may be blocked. In terms of tissue distribution, mainly expressed in the liver and kidney. Lower expression found in intestine, gizzard, glandular stomach, heart, brain and spleen.

The protein localises to the cytoplasm. In terms of biological role, endoribonuclease responsible for the inhibition of the translation by cleaving mRNA. Inhibits cell-free protein synthesis. Cleaves phosphodiester bonds only in single-stranded RNA. The protein is Ribonuclease UK114 of Gallus gallus (Chicken).